A 290-amino-acid chain; its full sequence is Glycine--tRNA ligase alpha subunit (290 aa).

Belongs to the class-II aminoacyl-tRNA synthetase family. In terms of assembly, tetramer of two alpha and two beta subunits.

The protein localises to the cytoplasm. The enzyme catalyses tRNA(Gly) + glycine + ATP = glycyl-tRNA(Gly) + AMP + diphosphate. The polypeptide is Glycine--tRNA ligase alpha subunit (Nitratiruptor sp. (strain SB155-2)).